The chain runs to 201 residues: LexA repressor (201 aa).

Positions 28-48 form a DNA-binding region, H-T-H motif; it reads RAEIAARLGFRSPNAAEEHLK. Catalysis depends on for autocatalytic cleavage activity residues serine 118 and lysine 155.

This sequence belongs to the peptidase S24 family. In terms of assembly, homodimer.

The catalysed reaction is Hydrolysis of Ala-|-Gly bond in repressor LexA.. Represses a number of genes involved in the response to DNA damage (SOS response), including recA and lexA. In the presence of single-stranded DNA, RecA interacts with LexA causing an autocatalytic cleavage which disrupts the DNA-binding part of LexA, leading to derepression of the SOS regulon and eventually DNA repair. This chain is LexA repressor, found in Photorhabdus laumondii subsp. laumondii (strain DSM 15139 / CIP 105565 / TT01) (Photorhabdus luminescens subsp. laumondii).